We begin with the raw amino-acid sequence, 356 residues long: Sensor protein BasS (356 aa).

Residues 1–13 (MRFQRRAMTLRQR) are Cytoplasmic-facing. A helical transmembrane segment spans residues 14–34 (LMLTIGLILLVFQLISTFWLW). Over 35 to 64 (HESTEQIQLFEQALRDNRNNDRHIMHEIRE) the chain is Periplasmic. The helical transmembrane segment at 65-88 (AVASLIVPGVFMVSLTLLICYQAV) threads the bilayer. The HAMP domain occupies 89–141 (RRITRPLAELQKELEARTADNLAPIAIHSSTLEIESVVSAINQLVTRLTTTLD). The Cytoplasmic portion of the chain corresponds to 89 to 356 (RRITRPLAEL…TRAWVLLKKA (268 aa)). The Histidine kinase domain occupies 149-356 (DVAHELRTPL…TRAWVLLKKA (208 aa)). His152 is modified (phosphohistidine; by autocatalysis).

Post-translationally, autophosphorylated.

It localises to the cell inner membrane. The enzyme catalyses ATP + protein L-histidine = ADP + protein N-phospho-L-histidine.. In terms of biological role, member of the two-component regulatory system BasS/BasR. Autophosphorylates and activates BasR by phosphorylation. Plays a role in the adaptation of the organism to the host environment, in particular to neutrophils, and therefore it plays a role in virulence as well. In Salmonella typhimurium (strain LT2 / SGSC1412 / ATCC 700720), this protein is Sensor protein BasS (basS).